Here is a 324-residue protein sequence, read N- to C-terminus: Hydroxylase/desaturase CTB9 (324 aa).

Residues 1–11 (MTSTITTTETL) are compositionally biased toward polar residues. Disordered stretches follow at residues 1–33 (MTSTITTTETLQDAVPFVAPPSPPEDTSNKELP) and 288–308 (TARRVPHSSFPTPDDFGEPRA).

Belongs to the asaB hydroxylase/desaturase family.

The protein operates within mycotoxin biosynthesis. In terms of biological role, hydroxylase/desaturase; part of the gene cluster that mediates the biosynthesis of cercosporin, a light-activated, non-host-selective toxin. The perylenequinone chromophore of cercosporin absorbs light energy to attain an electronically-activated triplet state and produces active oxygen species such as the hydroxyl radical, superoxide, hydrogen peroxide or singlet oxygen upon reaction with oxygen molecules. These reactive oxygen species cause damage to various cellular components including lipids, proteins and nucleic acids. The first step of cercosporin biosynthesis is performed by the polyketide synthase CTB1 which catalyzes the formation of nor-toralactone. The starter unit acyltransferase (SAT) domain of CTB1 initiates polyketide extension by the selective utilization of acetyl-CoA, which is elongated to the heptaketide in the beta-ketoacyl synthase (KS) domain by successive condensations with six malonyl units introduced by the malonyl acyltransferase (MAT) domain. The product template (PT) domain catalyzes C4-C9 and C2-C11 aldol cyclizations and dehydrations to a trihydroxynaphthalene, which is thought to be delivered to the thioesterase (TE) domain for product release. The bifunctional enzyme CTB3 then methylates nor-toralactone to toralactone before conducting an unusual oxidative aromatic ring opening. The O-methyltransferase CTB2 further methylates the nascent OH-6 of the CBT3 product, blocking further oxidation at this site before the reductase CTB6 reduces the 2-oxopropyl ketone at position C7, giving naphthalene. The FAD-dependent monooxygenase CTB5 in concert with the multicopper oxidase CTB12 are responsible for homodimerization of naphthalene with CTB7 installing the dioxepine moiety, finally producing cercosporin. The fasciclin domain-containing protein CTB11 might act with CTB5 and CTB12 whereas the roles of CTB9 and CTB10 have still to be elucidated. The protein is Hydroxylase/desaturase CTB9 of Cercospora beticola (Sugarbeet leaf spot fungus).